The chain runs to 251 residues: Proteasome subunit alpha type-4-like (251 aa).

This sequence belongs to the peptidase T1A family. As to quaternary structure, the 26S proteasome consists of a 20S proteasome core and two 19S regulatory subunits. The 20S proteasome core is composed of 28 subunits that are arranged in four stacked rings, resulting in a barrel-shaped structure. The two end rings are each formed by seven alpha subunits, and the two central rings are each formed by seven beta subunits. The catalytic chamber with the active sites is on the inside of the barrel. As to expression, testis, prominent after meiosis II. After meiosis, predominantly localized to the haploid spermatid nuclei of the 64-cell cysts, remaining during the elongation and condensation of the spermatid nuclei. In mature, motile sperm, expression is seen exclusively in the sperm head.

The protein localises to the nucleus. In terms of biological role, the proteasome is a multicatalytic proteinase complex which is characterized by its ability to cleave peptides with Arg, Phe, Tyr, Leu, and Glu adjacent to the leaving group at neutral or slightly basic pH. The proteasome has an ATP-dependent proteolytic activity. The polypeptide is Proteasome subunit alpha type-4-like (Prosalpha3T) (Drosophila melanogaster (Fruit fly)).